Reading from the N-terminus, the 247-residue chain is Probable enoyl-CoA hydratase echA6 (247 aa).

Belongs to the enoyl-CoA hydratase/isomerase family.

It carries out the reaction a (3S)-3-hydroxyacyl-CoA = a (2E)-enoyl-CoA + H2O. The enzyme catalyses a 4-saturated-(3S)-3-hydroxyacyl-CoA = a (3E)-enoyl-CoA + H2O. Its function is as follows. Could possibly oxidize fatty acids using specific components. In Mycobacterium leprae (strain TN), this protein is Probable enoyl-CoA hydratase echA6 (echA6).